Consider the following 208-residue polypeptide: Small ribosomal subunit protein uS4 (208 aa).

The S4 RNA-binding domain occupies 98–161; it reads TRLDNTVYRL…RKIPVIAEAQ (64 aa).

It belongs to the universal ribosomal protein uS4 family. As to quaternary structure, part of the 30S ribosomal subunit. Contacts protein S5. The interaction surface between S4 and S5 is involved in control of translational fidelity.

Its function is as follows. One of the primary rRNA binding proteins, it binds directly to 16S rRNA where it nucleates assembly of the body of the 30S subunit. Functionally, with S5 and S12 plays an important role in translational accuracy. The chain is Small ribosomal subunit protein uS4 from Maridesulfovibrio salexigens (strain ATCC 14822 / DSM 2638 / NCIMB 8403 / VKM B-1763) (Desulfovibrio salexigens).